A 248-amino-acid chain; its full sequence is uncharacterized protein (248 aa).

It belongs to the glycosyltransferase 2 family.

This is an uncharacterized protein from Acanthamoeba polyphaga (Amoeba).